The chain runs to 890 residues: DNA mismatch repair protein MutS (890 aa).

Residue 607–614 coordinates ATP; the sequence is GPNMSGKS. The interval 832-851 is disordered; the sequence is ESQLSFFGTEQSSKKQDKPV.

The protein belongs to the DNA mismatch repair MutS family.

Functionally, this protein is involved in the repair of mismatches in DNA. It is possible that it carries out the mismatch recognition step. This protein has a weak ATPase activity. The chain is DNA mismatch repair protein MutS from Bacillus cereus (strain 03BB102).